Consider the following 459-residue polypeptide: Bifunctional protein GlmU (459 aa).

The tract at residues 1–229 (MSNFAIILAA…FDESLGVNDR (229 aa)) is pyrophosphorylase. Residues 8-11 (LAAG), K22, Q72, and 77-78 (GT) contribute to the UDP-N-acetyl-alpha-D-glucosamine site. D102 is a binding site for Mg(2+). UDP-N-acetyl-alpha-D-glucosamine contacts are provided by G139, E154, N169, and N227. Residue N227 coordinates Mg(2+). Positions 230-250 (VALATAESVMRRRINHKHMVN) are linker. An N-acetyltransferase region spans residues 251 to 459 (GVSFVNPEAT…TRLPHHPKNQ (209 aa)). UDP-N-acetyl-alpha-D-glucosamine-binding residues include R332 and K350. Catalysis depends on H362, which acts as the Proton acceptor. Residues Y365 and N376 each contribute to the UDP-N-acetyl-alpha-D-glucosamine site. Acetyl-CoA is bound by residues A379, 385-386 (NY), S404, A422, and R439.

The protein in the N-terminal section; belongs to the N-acetylglucosamine-1-phosphate uridyltransferase family. This sequence in the C-terminal section; belongs to the transferase hexapeptide repeat family. As to quaternary structure, homotrimer. Requires Mg(2+) as cofactor.

The protein localises to the cytoplasm. It catalyses the reaction alpha-D-glucosamine 1-phosphate + acetyl-CoA = N-acetyl-alpha-D-glucosamine 1-phosphate + CoA + H(+). The enzyme catalyses N-acetyl-alpha-D-glucosamine 1-phosphate + UTP + H(+) = UDP-N-acetyl-alpha-D-glucosamine + diphosphate. Its pathway is nucleotide-sugar biosynthesis; UDP-N-acetyl-alpha-D-glucosamine biosynthesis; N-acetyl-alpha-D-glucosamine 1-phosphate from alpha-D-glucosamine 6-phosphate (route II): step 2/2. It participates in nucleotide-sugar biosynthesis; UDP-N-acetyl-alpha-D-glucosamine biosynthesis; UDP-N-acetyl-alpha-D-glucosamine from N-acetyl-alpha-D-glucosamine 1-phosphate: step 1/1. It functions in the pathway bacterial outer membrane biogenesis; LPS lipid A biosynthesis. In terms of biological role, catalyzes the last two sequential reactions in the de novo biosynthetic pathway for UDP-N-acetylglucosamine (UDP-GlcNAc). The C-terminal domain catalyzes the transfer of acetyl group from acetyl coenzyme A to glucosamine-1-phosphate (GlcN-1-P) to produce N-acetylglucosamine-1-phosphate (GlcNAc-1-P), which is converted into UDP-GlcNAc by the transfer of uridine 5-monophosphate (from uridine 5-triphosphate), a reaction catalyzed by the N-terminal domain. This Streptococcus pneumoniae (strain Taiwan19F-14) protein is Bifunctional protein GlmU.